The following is a 545-amino-acid chain: Cannabidiolic acid synthase-like 2 (545 aa).

A signal peptide spans 1–28; that stretch reads MKCSTFCFWYVCKIIFFFLSFNIQISIA. The cysteines at positions 37 and 99 are disulfide-linked. Residues N45, N65, N89, and N168 are each glycosylated (N-linked (GlcNAc...) asparagine). The region spanning 77–251 is the FAD-binding PCMH-type domain; that stretch reads TTPKPLVITT…AAWKIRLVAV (175 aa). Residues 114 to 176 constitute a cross-link (6-(S-cysteinyl)-8alpha-(pros-histidyl)-FAD (His-Cys)); it reads HDAEGMSYIS…ENLSFPAGYC (63 aa). Position 292 (H292) interacts with substrate. Residues N297, N305, N329, and N361 are each glycosylated (N-linked (GlcNAc...) asparagine). Y417 serves as a coordination point for substrate. N467 carries an N-linked (GlcNAc...) asparagine glycan. The active-site Proton acceptor is Y484. An N-linked (GlcNAc...) asparagine glycan is attached at N499.

This sequence belongs to the oxygen-dependent FAD-linked oxidoreductase family. FAD serves as cofactor. In terms of processing, the FAD cofactor is bound via a bicovalent 6-S-cysteinyl, 8alpha-N1-histidyl FAD linkage.

The protein resides in the secreted. Has no cannabidiolic acid synthase activity. In Cannabis sativa (Hemp), this protein is Cannabidiolic acid synthase-like 2 (CBDAS3).